Here is a 387-residue protein sequence, read N- to C-terminus: MKILADENMPYVEQLFGDLGTIEAVNGRTLTSEQVKDADVLLVRSVTKVNQALLSLNTNLKFVGSATIGTDHIDQSYLASQGIPFTNAPGCNATAVGEFAFIAMLELAKRFDTELKGKVVGIVGAGNTGSAVAKCLEAYGVEVLLNDPLIEADDPRTFVSLEALTERADVISLHVPLTKDGAHKTWYLFDEQRLQNLKPDTWLLNCCRGEVIDNRALIKIKAQRPDIKLVLDVWEGEPEPMLELVPFVELATPHIAGYSLEGKARGTYMLYQKLMAVLGIDADKSMTSLLPTLWSQQVSLDELPSEKALLQLSRFVYDLRDDDELFRKTLLDDSSIKAGENSANNNGFDLMRKNHKHRREFSALKLASAGQSDVDWLLNLGFSGVGR.

2 residues coordinate substrate: S45 and T67. Residue D147 coordinates NAD(+). R208 is a catalytic residue. D232 contacts NAD(+). The active site involves E237. The Proton donor role is filled by H254. G257 is an NAD(+) binding site. Y258 lines the substrate pocket.

It belongs to the D-isomer specific 2-hydroxyacid dehydrogenase family. PdxB subfamily. Homodimer.

The protein localises to the cytoplasm. It carries out the reaction 4-phospho-D-erythronate + NAD(+) = (R)-3-hydroxy-2-oxo-4-phosphooxybutanoate + NADH + H(+). It participates in cofactor biosynthesis; pyridoxine 5'-phosphate biosynthesis; pyridoxine 5'-phosphate from D-erythrose 4-phosphate: step 2/5. Functionally, catalyzes the oxidation of erythronate-4-phosphate to 3-hydroxy-2-oxo-4-phosphonooxybutanoate. In Shewanella sediminis (strain HAW-EB3), this protein is Erythronate-4-phosphate dehydrogenase.